A 245-amino-acid chain; its full sequence is tRNA1(Val) (adenine(37)-N6)-methyltransferase (245 aa).

This sequence belongs to the methyltransferase superfamily. tRNA (adenine-N(6)-)-methyltransferase family.

The protein resides in the cytoplasm. It carries out the reaction adenosine(37) in tRNA1(Val) + S-adenosyl-L-methionine = N(6)-methyladenosine(37) in tRNA1(Val) + S-adenosyl-L-homocysteine + H(+). Functionally, specifically methylates the adenine in position 37 of tRNA(1)(Val) (anticodon cmo5UAC). The polypeptide is tRNA1(Val) (adenine(37)-N6)-methyltransferase (Shigella dysenteriae serotype 1 (strain Sd197)).